Here is a 78-residue protein sequence, read N- to C-terminus: Large ribosomal subunit protein bL28 (78 aa).

Belongs to the bacterial ribosomal protein bL28 family.

This is Large ribosomal subunit protein bL28 from Thiobacillus denitrificans (strain ATCC 25259 / T1).